Reading from the N-terminus, the 505-residue chain is Catalase (505 aa).

The interval 1-25 (MSKQDGKLTGLFGAPVSDRENSMTA) is disordered. Residues His56 and Asn129 contribute to the active site. Residue Tyr339 coordinates heme.

It belongs to the catalase family. In terms of assembly, homodimer. Requires heme as cofactor.

The catalysed reaction is 2 H2O2 = O2 + 2 H2O. Decomposes hydrogen peroxide into water and oxygen; serves to protect cells from the toxic effects of hydrogen peroxide. This chain is Catalase (katA), found in Staphylococcus warneri.